The sequence spans 130 residues: Small ribosomal subunit protein uS9 (130 aa).

The disordered stretch occupies residues 105–130 (TRDSRMKERKKPGLKGARRAPQFSKR). Residues 111–130 (KERKKPGLKGARRAPQFSKR) are compositionally biased toward basic residues.

It belongs to the universal ribosomal protein uS9 family.

In Listeria welshimeri serovar 6b (strain ATCC 35897 / DSM 20650 / CCUG 15529 / CIP 8149 / NCTC 11857 / SLCC 5334 / V8), this protein is Small ribosomal subunit protein uS9.